We begin with the raw amino-acid sequence, 336 residues long: DNA repair protein RAD51 homolog B (336 aa).

The 30-residue stretch at 45–74 (TVEAVAYAPKKELLNIKGISEAKAEKILAE) folds into the HhH domain. Position 124–131 (124–131 (GEFRTGKT)) interacts with ATP. Residues 242 to 257 (LARFLRMLLRLADEFG) carry the Nuclear export signal motif.

This sequence belongs to the RecA family. RAD51 subfamily. In terms of assembly, forms linear homooligomers, giving rise to a RAD51 nucleoprotein filament, which is essential for strand-pairing reactions during DNA recombination.

It localises to the nucleus. It is found in the cytoplasm. The protein resides in the chromosome. Plays an important role in homologous strand exchange, a key step in DNA repair through homologous recombination (HR). Binds to single-stranded DNA in an ATP-dependent manner to form nucleoprotein filaments which are essential for the homology search and strand exchange. Catalyzes the recognition of homology and strand exchange between homologous DNA partners to form a joint molecule between a processed DNA break and the repair template. Recruited to resolve stalled replication forks during replication stress. Also involved in interstrand cross-link repair. This Xenopus laevis (African clawed frog) protein is DNA repair protein RAD51 homolog B (rad51-b).